We begin with the raw amino-acid sequence, 372 residues long: ATP phosphoribosyltransferase regulatory subunit (372 aa).

Belongs to the class-II aminoacyl-tRNA synthetase family. HisZ subfamily. As to quaternary structure, heteromultimer composed of HisG and HisZ subunits.

The protein resides in the cytoplasm. It participates in amino-acid biosynthesis; L-histidine biosynthesis; L-histidine from 5-phospho-alpha-D-ribose 1-diphosphate: step 1/9. In terms of biological role, required for the first step of histidine biosynthesis. May allow the feedback regulation of ATP phosphoribosyltransferase activity by histidine. In Allorhizobium ampelinum (strain ATCC BAA-846 / DSM 112012 / S4) (Agrobacterium vitis (strain S4)), this protein is ATP phosphoribosyltransferase regulatory subunit.